The chain runs to 127 residues: MKLLTSLFLLSLVLCVNSQGWLRDSLDFLNQARLGAGDMWRAYRDMREANFKNSDKYFHARGNYDAAKRGPGGVWAAEVLSDAREFLQGGSSGRGVEDSMADQEANRWGRSGKDPNRYRPKGLDPKY.

Positions 1–18 (MKLLTSLFLLSLVLCVNS) are cleaved as a signal peptide. A Pyrrolidone carboxylic acid modification is found at Q19. The disordered stretch occupies residues 89–127 (GGSSGRGVEDSMADQEANRWGRSGKDPNRYRPKGLDPKY). A compositionally biased stretch (basic and acidic residues) spans 104 to 127 (EANRWGRSGKDPNRYRPKGLDPKY).

This sequence belongs to the SAA family. Expressed by the liver; secreted in plasma.

The protein localises to the secreted. Its function is as follows. Major acute phase reactant. Apolipoprotein of the HDL complex. This is Serum amyloid A protein (SAA1) from Notamacropus eugenii (Tammar wallaby).